The sequence spans 359 residues: Probable dual-specificity RNA methyltransferase RlmN (359 aa).

Glutamate 91 acts as the Proton acceptor in catalysis. A Radical SAM core domain is found at 97–329; the sequence is QHYGHSVCVT…KKNGVNCVVR (233 aa). A disulfide bridge links cysteine 104 with cysteine 340. [4Fe-4S] cluster is bound by residues cysteine 111, cysteine 115, and cysteine 118. S-adenosyl-L-methionine contacts are provided by residues 163-164, serine 195, 218-220, and asparagine 296; these read GE and SLH. The active-site S-methylcysteine intermediate is the cysteine 340.

Belongs to the radical SAM superfamily. RlmN family. [4Fe-4S] cluster serves as cofactor.

The protein resides in the cytoplasm. The enzyme catalyses adenosine(2503) in 23S rRNA + 2 reduced [2Fe-2S]-[ferredoxin] + 2 S-adenosyl-L-methionine = 2-methyladenosine(2503) in 23S rRNA + 5'-deoxyadenosine + L-methionine + 2 oxidized [2Fe-2S]-[ferredoxin] + S-adenosyl-L-homocysteine. It carries out the reaction adenosine(37) in tRNA + 2 reduced [2Fe-2S]-[ferredoxin] + 2 S-adenosyl-L-methionine = 2-methyladenosine(37) in tRNA + 5'-deoxyadenosine + L-methionine + 2 oxidized [2Fe-2S]-[ferredoxin] + S-adenosyl-L-homocysteine. Its function is as follows. Specifically methylates position 2 of adenine 2503 in 23S rRNA and position 2 of adenine 37 in tRNAs. This Streptococcus pyogenes serotype M2 (strain MGAS10270) protein is Probable dual-specificity RNA methyltransferase RlmN.